The primary structure comprises 185 residues: Peptidoglycan-recognition protein SC1a (185 aa).

Positions 1-21 (MVSKVALLLAVLVCSQYMAQG) are cleaved as a signal peptide. The 125-residue stretch at 46-170 (SYAIIHHTAG…RQVSATECPG (125 aa)) folds into the N-acetylmuramoyl-L-alanine amidase domain. Histidine 51 serves as a coordination point for Zn(2+). Cysteines 58 and 64 form a disulfide. Zn(2+)-binding residues include histidine 160 and cysteine 168.

This sequence belongs to the N-acetylmuramoyl-L-alanine amidase 2 family. Zn(2+) serves as cofactor.

It localises to the secreted. It carries out the reaction Hydrolyzes the link between N-acetylmuramoyl residues and L-amino acid residues in certain cell-wall glycopeptides.. In terms of biological role, N-acetylmuramyl-L-alanine amidase involved in innate immunity by degrading bacterial peptidoglycans (PGN). Plays a scavenger role by digesting biologically active PGN into biologically inactive fragments. Has no direct bacteriolytic activity. This is Peptidoglycan-recognition protein SC1a from Drosophila melanogaster (Fruit fly).